The primary structure comprises 473 residues: Lactate utilization protein B (473 aa).

4Fe-4S ferredoxin-type domains lie at 302-332 (GSEF…GHSY) and 351-380 (YDDY…LHDL). [4Fe-4S] cluster contacts are provided by Cys311, Cys314, Cys317, Cys321, Cys364, Cys367, and Cys371.

Belongs to the LutB/YkgF family.

In terms of biological role, is involved in L-lactate degradation and allows cells to grow with lactate as the sole carbon source. Has probably a role as an electron transporter during oxidation of L-lactate. In Bacillus cytotoxicus (strain DSM 22905 / CIP 110041 / 391-98 / NVH 391-98), this protein is Lactate utilization protein B.